The chain runs to 287 residues: Ribosomal RNA-processing protein 8 (287 aa).

The interval 1–62 (MTTEENKTSR…SAPSKRPKPS (62 aa)) is disordered. Positions 9–21 (SRNRKRKRQRNPK) are enriched in basic residues. Residues 35-46 (QNEKKNQRDTKN) show a composition bias toward basic and acidic residues. His-107, Gly-142, Asp-160, Asp-172, Met-173, and Cys-189 together coordinate S-adenosyl-L-methionine.

Belongs to the methyltransferase superfamily. RRP8 family.

The protein resides in the nucleus. It is found in the nucleolus. Probable methyltransferase required to silence rDNA. The sequence is that of Ribosomal RNA-processing protein 8 from Arabidopsis thaliana (Mouse-ear cress).